A 214-amino-acid polypeptide reads, in one-letter code: Threonylcarbamoyl-AMP synthase (214 aa).

Positions threonine 9 to arginine 214 constitute a YrdC-like domain.

It belongs to the SUA5 family. TsaC subfamily.

It is found in the cytoplasm. It carries out the reaction L-threonine + hydrogencarbonate + ATP = L-threonylcarbamoyladenylate + diphosphate + H2O. Required for the formation of a threonylcarbamoyl group on adenosine at position 37 (t(6)A37) in tRNAs that read codons beginning with adenine. Catalyzes the conversion of L-threonine, HCO(3)(-)/CO(2) and ATP to give threonylcarbamoyl-AMP (TC-AMP) as the acyladenylate intermediate, with the release of diphosphate. The sequence is that of Threonylcarbamoyl-AMP synthase from Psychrobacter arcticus (strain DSM 17307 / VKM B-2377 / 273-4).